The primary structure comprises 1114 residues: Constitutive coactivator of PPAR-gamma-like protein 1 (1114 aa).

An interaction with YES1, SRC and FYN region spans residues 339–402 (PPHYLARPNP…YNLAEPALTL (64 aa)). 2 disordered regions span residues 372-396 (QAKPVAPQVPSPGAPGQGPHPYNLA) and 411-519 (EQNY…GNQI). The span at 431–443 (SPINPAPSGSPNH) shows a compositional bias: polar residues. The segment covering 477–498 (GWEKTGSHSEPQARGDPGDQTK) has biased composition (basic and acidic residues). The segment covering 499 to 510 (AEGSSTASSGSQ) has biased composition (polar residues). T651 carries the post-translational modification Phosphothreonine. Positions 825–1114 (AEQAAKVEKM…LEAAVLKKEE (290 aa)) are RNA binding. Residues R869, R880, and R882 each carry the omega-N-methylarginine modification. A disordered region spans residues 918–940 (FSGSDSSRTSKSQGGIQPIPSQG). K928 is modified (N6-acetyllysine). Over residues 929-940 (SQGGIQPIPSQG) the composition is skewed to low complexity. S956 carries the phosphoserine modification. Omega-N-methylarginine is present on residues R978 and R982. The tract at residues 1009 to 1099 (AIQGKPPYAA…LNALSTDSGC (91 aa)) is disordered. S1019 is modified (phosphoserine). Positions 1022–1033 (EVAKELKSRSGE) are enriched in basic and acidic residues. Positions 1034–1043 (SKSSAMSSDG) are enriched in polar residues. Residues S1040, S1041, and S1044 each carry the phosphoserine modification. Residues 1060 to 1097 (MNGSAGDTRAPSHSESALNNDSKTCNTNPHLNALSTDS) are compositionally biased toward polar residues.

The protein belongs to the constitutive coactivator of PPAR-gamma family. Interacts with PURA. Interacts with YES1, SRC, FYN. Upon tyrosine phosphorylation, interacts with PIK3R1. Arg-978 is dimethylated, probably to asymmetric dimethylarginine. In terms of processing, phosphorylated on tyrosine by src family kinases upon ultraviolet exposure.

It localises to the cytoplasm. The protein resides in the cell membrane. Component of the oxidative stress-induced survival signaling. May regulate the activation of SRC family protein kinases. May act as a scaffolding protein enabling SRC family protein kinases to phosphorylate and activate PI3-kinase. Binds IGF2 RNA and promotes the production of IGF2 protein. The protein is Constitutive coactivator of PPAR-gamma-like protein 1 (FAM120A) of Bos taurus (Bovine).